A 500-amino-acid chain; its full sequence is Cobyric acid synthase (500 aa).

A GATase cobBQ-type domain is found at 251–449 (KLNIVIPIMP…LHGVFDHPDA (199 aa)). Catalysis depends on Cys-332, which acts as the Nucleophile. Residue His-441 is part of the active site.

This sequence belongs to the CobB/CobQ family. CobQ subfamily.

Its pathway is cofactor biosynthesis; adenosylcobalamin biosynthesis. Its function is as follows. Catalyzes amidations at positions B, D, E, and G on adenosylcobyrinic A,C-diamide. NH(2) groups are provided by glutamine, and one molecule of ATP is hydrogenolyzed for each amidation. In Marinomonas sp. (strain MWYL1), this protein is Cobyric acid synthase.